Reading from the N-terminus, the 73-residue chain is Frenatin 3.1 (73 aa).

The first 22 residues, 1 to 22, serve as a signal peptide directing secretion; sequence MHFLKKSIFLVLFLGLVSLSIC. Positions 23–46 are excised as a propeptide; that stretch reads EKEKREDQNEEEVDENEEASEEKR. Residues 25 to 45 are disordered; sequence EKREDQNEEEVDENEEASEEK. The segment covering 30–42 has biased composition (acidic residues); the sequence is QNEEEVDENEEAS.

Expressed by the skin glands.

It is found in the secreted. Functionally, antimicrobial peptide with activity against both Gram-positive and Gram-negative bacteria. This chain is Frenatin 3.1, found in Nyctimystes infrafrenatus (White-lipped tree frog).